The primary structure comprises 304 residues: Glycine--tRNA ligase alpha subunit (304 aa).

This sequence belongs to the class-II aminoacyl-tRNA synthetase family. In terms of assembly, tetramer of two alpha and two beta subunits.

Its subcellular location is the cytoplasm. The enzyme catalyses tRNA(Gly) + glycine + ATP = glycyl-tRNA(Gly) + AMP + diphosphate. This chain is Glycine--tRNA ligase alpha subunit, found in Tolumonas auensis (strain DSM 9187 / NBRC 110442 / TA 4).